The chain runs to 93 residues: Regulatory protein RepI (93 aa).

Its function is as follows. This protein is involved in regulating the plasmid copy-number. Increasing the level of this protein results in a higher plasmid copy-number. The protein is Regulatory protein RepI (repI) of Escherichia coli.